The primary structure comprises 315 residues: Methionyl-tRNA formyltransferase (315 aa).

113–116 (SLLP) is a binding site for (6S)-5,6,7,8-tetrahydrofolate.

It belongs to the Fmt family.

The enzyme catalyses L-methionyl-tRNA(fMet) + (6R)-10-formyltetrahydrofolate = N-formyl-L-methionyl-tRNA(fMet) + (6S)-5,6,7,8-tetrahydrofolate + H(+). In terms of biological role, attaches a formyl group to the free amino group of methionyl-tRNA(fMet). The formyl group appears to play a dual role in the initiator identity of N-formylmethionyl-tRNA by promoting its recognition by IF2 and preventing the misappropriation of this tRNA by the elongation apparatus. This Photorhabdus laumondii subsp. laumondii (strain DSM 15139 / CIP 105565 / TT01) (Photorhabdus luminescens subsp. laumondii) protein is Methionyl-tRNA formyltransferase.